Reading from the N-terminus, the 796-residue chain is Vacuolar protein sorting-associated protein 35 (796 aa).

Ser7 bears the Phosphoserine mark. Interaction with SNX3 stretches follow at residues 25–44 (VQSF…DALK) and 205–215 (DREKRERERQE). Residues 438–796 (CYVLSNVLDY…EGPIYEGLIL (359 aa)) are interaction with SLC11A2. Positions 500–693 (SEDPDQQYLI…DKNGEELHGG (194 aa)) are interaction with IGF2R cytoplasmic domain. The residue at position 783 (Ser783) is a Phosphoserine. The residue at position 791 (Tyr791) is a Phosphotyrosine.

The protein belongs to the VPS35 family. In terms of assembly, component of the heterotrimeric retromer cargo-selective complex (CSC), also decribed as vacuolar protein sorting subcomplex (VPS), formed by VPS26 (VPS26A or VPS26B), VPS29 and VPS35. The CSC has a highly elongated structure with VPS26 and VPS29 binding independently at opposite distal ends of VPS35 as central platform. The CSC is believed to associate with variable sorting nexins to form functionally distinct retromer complex variants. The originally described retromer complex (also called SNX-BAR retromer) is a pentamer containing the CSC and a heterodimeric membrane-deforming subcomplex formed between SNX1 or SNX2 and SNX5 or SNX6 (also called SNX-BAR subcomplex); the respective CSC and SNX-BAR subcomplexes associate with low affinity. The CSC associates with SNX3 to form a SNX3-retromer complex. The CSC associates with SNX27, the WASH complex and the SNX-BAR subcomplex to form the SNX27-retromer complex. Interacts with VPS26A, VPS26B, VPS29, SNX1, SNX2, IGF2R, SNX3, GOLPH3, LRRK2, SLC11A2, WASHC2A, WASHC2C, FKBP15, WASHC1, RAB7A, SNX27, WASHC5, EHD1. Interacts with MAGEL2; leading to recruitment of the TRIM27:MAGEL2 E3 ubiquitin ligase complex retromer-containing endosomes. Interacts with SORCS2. (Microbial infection) Interacts with human papillomavirus 16 minor capsid protein L2 (via C-terminus); this interaction mediates the transport of the capsid from the early endosome to the Golgi apparatus. As to expression, ubiquitous. Highly expressed in heart, brain, placenta, skeletal muscle, spleen, thymus, testis, ovary, small intestine, kidney and colon.

Its subcellular location is the cytoplasm. The protein resides in the membrane. The protein localises to the endosome. It is found in the early endosome. It localises to the late endosome. In terms of biological role, acts as a component of the retromer cargo-selective complex (CSC). The CSC is believed to be the core functional component of retromer or respective retromer complex variants acting to prevent missorting of selected transmembrane cargo proteins into the lysosomal degradation pathway. The recruitment of the CSC to the endosomal membrane involves RAB7A and SNX3. The CSC seems to associate with the cytoplasmic domain of cargo proteins predominantly via VPS35; however, these interactions seem to be of low affinity and retromer SNX proteins may also contribute to cargo selectivity thus questioning the classical function of the CSC. The SNX-BAR retromer mediates retrograde transport of cargo proteins from endosomes to the trans-Golgi network (TGN) and is involved in endosome-to-plasma membrane transport for cargo protein recycling. The SNX3-retromer mediates the retrograde endosome-to-TGN transport of WLS distinct from the SNX-BAR retromer pathway. The SNX27-retromer is believed to be involved in endosome-to-plasma membrane trafficking and recycling of a broad spectrum of cargo proteins. The CSC seems to act as recruitment hub for other proteins, such as the WASH complex and TBC1D5. Required for retrograde transport of lysosomal enzyme receptor IGF2R and SLC11A2. Required to regulate transcytosis of the polymeric immunoglobulin receptor (pIgR-pIgA). Required for endosomal localization of WASHC2C. Mediates the association of the CSC with the WASH complex via WASHC2. Required for the endosomal localization of TBC1D5. Functionally, (Microbial infection) The heterotrimeric retromer cargo-selective complex (CSC) mediates the exit of human papillomavirus from the early endosome and the delivery to the Golgi apparatus. This is Vacuolar protein sorting-associated protein 35 from Homo sapiens (Human).